Here is a 510-residue protein sequence, read N- to C-terminus: NAD(P)H-quinone oxidoreductase subunit 2 A, chloroplastic (510 aa).

A run of 12 helical transmembrane segments spans residues 31-51, 59-79, 99-119, 124-144, 149-169, 183-203, 229-249, 295-315, 323-343, 354-374, 395-415, and 418-438; these read FIFPECILIFGLILLLMIDLT, WFYFISSTSLVISITALLFRW, IFQFLILLCSTLCIPLSVEYI, MAITEFLLFVLTATLGGMFLC, LITIFVAPECFSLCSYLLSGY, YLLMGGASSSILVHGFSWLYG, ISIALISITVGLGFKLSPAPF, WHLLLEILAILSMILGNLLAI, MLAYSSIGQIGYVIIGIIVGD, YMLFYISMNLGTFACIVLFGL, ALSLALCLLSLGGLPPLAGFF, and LYLFWCGWQAGLYFLVSIGLL.

The protein belongs to the complex I subunit 2 family. In terms of assembly, NDH is composed of at least 16 different subunits, 5 of which are encoded in the nucleus.

It localises to the plastid. The protein resides in the chloroplast thylakoid membrane. The catalysed reaction is a plastoquinone + NADH + (n+1) H(+)(in) = a plastoquinol + NAD(+) + n H(+)(out). The enzyme catalyses a plastoquinone + NADPH + (n+1) H(+)(in) = a plastoquinol + NADP(+) + n H(+)(out). In terms of biological role, NDH shuttles electrons from NAD(P)H:plastoquinone, via FMN and iron-sulfur (Fe-S) centers, to quinones in the photosynthetic chain and possibly in a chloroplast respiratory chain. The immediate electron acceptor for the enzyme in this species is believed to be plastoquinone. Couples the redox reaction to proton translocation, and thus conserves the redox energy in a proton gradient. The sequence is that of NAD(P)H-quinone oxidoreductase subunit 2 A, chloroplastic from Oryza nivara (Indian wild rice).